The chain runs to 108 residues: uncharacterized protein (108 aa).

3 helical membrane-spanning segments follow: residues 4–24, 46–66, and 81–101; these read IIFL…FFSM, GMMV…IFIG, and IMAI…WFVL.

The protein localises to the cell membrane. This is an uncharacterized protein from Escherichia coli O157:H7.